Here is a 136-residue protein sequence, read N- to C-terminus: Nucleoside diphosphate kinase (136 aa).

ATP contacts are provided by K9, F57, R85, T91, R102, and N112. H115 functions as the Pros-phosphohistidine intermediate in the catalytic mechanism.

The protein belongs to the NDK family. As to quaternary structure, homotetramer. The cofactor is Mg(2+).

Its subcellular location is the cytoplasm. It carries out the reaction a 2'-deoxyribonucleoside 5'-diphosphate + ATP = a 2'-deoxyribonucleoside 5'-triphosphate + ADP. It catalyses the reaction a ribonucleoside 5'-diphosphate + ATP = a ribonucleoside 5'-triphosphate + ADP. Functionally, major role in the synthesis of nucleoside triphosphates other than ATP. The ATP gamma phosphate is transferred to the NDP beta phosphate via a ping-pong mechanism, using a phosphorylated active-site intermediate. This chain is Nucleoside diphosphate kinase, found in Acetivibrio thermocellus (strain ATCC 27405 / DSM 1237 / JCM 9322 / NBRC 103400 / NCIMB 10682 / NRRL B-4536 / VPI 7372) (Clostridium thermocellum).